The primary structure comprises 133 residues: Ribosome-binding factor A (133 aa).

This sequence belongs to the RbfA family. Monomer. Binds 30S ribosomal subunits, but not 50S ribosomal subunits or 70S ribosomes.

The protein localises to the cytoplasm. Functionally, one of several proteins that assist in the late maturation steps of the functional core of the 30S ribosomal subunit. Associates with free 30S ribosomal subunits (but not with 30S subunits that are part of 70S ribosomes or polysomes). Required for efficient processing of 16S rRNA. May interact with the 5'-terminal helix region of 16S rRNA. This is Ribosome-binding factor A from Salmonella heidelberg (strain SL476).